The sequence spans 392 residues: S-adenosylmethionine synthase (392 aa).

H22 contacts ATP. Position 24 (D24) interacts with Mg(2+). A K(+)-binding site is contributed by E50. E63 and Q106 together coordinate L-methionine. Residues 106-116 (QSPDITQGVTL) are flexible loop. ATP-binding positions include 170–172 (DGK), 236–237 (KF), D245, 251–252 (RK), A268, and K272. Residue D245 coordinates L-methionine. An L-methionine-binding site is contributed by K276.

This sequence belongs to the AdoMet synthase family. In terms of assembly, homotetramer; dimer of dimers. Mg(2+) is required as a cofactor. It depends on K(+) as a cofactor.

The protein resides in the cytoplasm. The catalysed reaction is L-methionine + ATP + H2O = S-adenosyl-L-methionine + phosphate + diphosphate. It functions in the pathway amino-acid biosynthesis; S-adenosyl-L-methionine biosynthesis; S-adenosyl-L-methionine from L-methionine: step 1/1. Its function is as follows. Catalyzes the formation of S-adenosylmethionine (AdoMet) from methionine and ATP. The overall synthetic reaction is composed of two sequential steps, AdoMet formation and the subsequent tripolyphosphate hydrolysis which occurs prior to release of AdoMet from the enzyme. The sequence is that of S-adenosylmethionine synthase from Sulfurimonas denitrificans (strain ATCC 33889 / DSM 1251) (Thiomicrospira denitrificans (strain ATCC 33889 / DSM 1251)).